Here is a 317-residue protein sequence, read N- to C-terminus: Dehydrogenase/reductase SDR family member 12 (317 aa).

Positions 50 and 52 each coordinate NAD(+). S175 provides a ligand contact to substrate. NAD(+) is bound by residues Y201, K205, and T234. Y201 acts as the Proton acceptor in catalysis.

Belongs to the short-chain dehydrogenases/reductases (SDR) family.

Putative oxidoreductase. This is Dehydrogenase/reductase SDR family member 12 from Homo sapiens (Human).